Reading from the N-terminus, the 406-residue chain is Phosphopentomutase (406 aa).

The Mn(2+) site is built by Asp-10, Asp-305, His-310, Asp-346, His-347, and His-358.

The protein belongs to the phosphopentomutase family. The cofactor is Mn(2+).

It localises to the cytoplasm. The catalysed reaction is 2-deoxy-alpha-D-ribose 1-phosphate = 2-deoxy-D-ribose 5-phosphate. It carries out the reaction alpha-D-ribose 1-phosphate = D-ribose 5-phosphate. Its pathway is carbohydrate degradation; 2-deoxy-D-ribose 1-phosphate degradation; D-glyceraldehyde 3-phosphate and acetaldehyde from 2-deoxy-alpha-D-ribose 1-phosphate: step 1/2. In terms of biological role, isomerase that catalyzes the conversion of deoxy-ribose 1-phosphate (dRib-1-P) and ribose 1-phosphate (Rib-1-P) to deoxy-ribose 5-phosphate (dRib-5-P) and ribose 5-phosphate (Rib-5-P), respectively. The polypeptide is Phosphopentomutase (Agrobacterium fabrum (strain C58 / ATCC 33970) (Agrobacterium tumefaciens (strain C58))).